The sequence spans 316 residues: 4-hydroxy-3-methylbut-2-enyl diphosphate reductase (316 aa).

[4Fe-4S] cluster is bound at residue cysteine 12. (2E)-4-hydroxy-3-methylbut-2-enyl diphosphate-binding residues include histidine 43 and histidine 81. 2 residues coordinate dimethylallyl diphosphate: histidine 43 and histidine 81. Residues histidine 43 and histidine 81 each coordinate isopentenyl diphosphate. Cysteine 103 is a [4Fe-4S] cluster binding site. Histidine 131 contributes to the (2E)-4-hydroxy-3-methylbut-2-enyl diphosphate binding site. Histidine 131 serves as a coordination point for dimethylallyl diphosphate. Histidine 131 lines the isopentenyl diphosphate pocket. Glutamate 133 serves as the catalytic Proton donor. Threonine 170 is a binding site for (2E)-4-hydroxy-3-methylbut-2-enyl diphosphate. Cysteine 198 is a [4Fe-4S] cluster binding site. 3 residues coordinate (2E)-4-hydroxy-3-methylbut-2-enyl diphosphate: serine 226, asparagine 228, and serine 271. Dimethylallyl diphosphate contacts are provided by serine 226, asparagine 228, and serine 271. Residues serine 226, asparagine 228, and serine 271 each coordinate isopentenyl diphosphate.

Belongs to the IspH family. It depends on [4Fe-4S] cluster as a cofactor.

It carries out the reaction isopentenyl diphosphate + 2 oxidized [2Fe-2S]-[ferredoxin] + H2O = (2E)-4-hydroxy-3-methylbut-2-enyl diphosphate + 2 reduced [2Fe-2S]-[ferredoxin] + 2 H(+). It catalyses the reaction dimethylallyl diphosphate + 2 oxidized [2Fe-2S]-[ferredoxin] + H2O = (2E)-4-hydroxy-3-methylbut-2-enyl diphosphate + 2 reduced [2Fe-2S]-[ferredoxin] + 2 H(+). The protein operates within isoprenoid biosynthesis; dimethylallyl diphosphate biosynthesis; dimethylallyl diphosphate from (2E)-4-hydroxy-3-methylbutenyl diphosphate: step 1/1. It functions in the pathway isoprenoid biosynthesis; isopentenyl diphosphate biosynthesis via DXP pathway; isopentenyl diphosphate from 1-deoxy-D-xylulose 5-phosphate: step 6/6. In terms of biological role, catalyzes the conversion of 1-hydroxy-2-methyl-2-(E)-butenyl 4-diphosphate (HMBPP) into a mixture of isopentenyl diphosphate (IPP) and dimethylallyl diphosphate (DMAPP). Acts in the terminal step of the DOXP/MEP pathway for isoprenoid precursor biosynthesis. In Geobacillus thermodenitrificans (strain NG80-2), this protein is 4-hydroxy-3-methylbut-2-enyl diphosphate reductase.